Reading from the N-terminus, the 135-residue chain is uncharacterized protein (135 aa).

The segment at 56 to 135 is disordered; it reads VQSHNRGINN…QKGQLKIEKV (80 aa). Residues 64-74 are compositionally biased toward basic residues; that stretch reads NNRRRDQKRKQ. Residues 77–89 are compositionally biased toward polar residues; that stretch reads SIKQDNDLNVSSE. The segment covering 108–135 has biased composition (basic and acidic residues); the sequence is YKETPDLDEPGSREKRVSQKGQLKIEKV.

This is an uncharacterized protein from Schizosaccharomyces pombe (strain 972 / ATCC 24843) (Fission yeast).